A 163-amino-acid polypeptide reads, in one-letter code: Homoaconitase small subunit (163 aa).

It belongs to the LeuD family. As to quaternary structure, heterodimer of HacA and HacB.

It catalyses the reaction (2R,3S)-homoisocitrate = cis-homoaconitate + H2O. It participates in amino-acid biosynthesis; L-lysine biosynthesis via AAA pathway; L-alpha-aminoadipate from 2-oxoglutarate: step 3/5. With respect to regulation, is not inhibited by lysine. In terms of biological role, catalyzes the reversible hydration of cis-homoaconitate ((Z)-but-1-ene-1,2,4-tricarboxylate) to homoisocitrate ((1R,2S)-1-hydroxybutane-1,2,4-tricarboxylate). Can catalyze neither the dehydration of (R)-homocitrate ((2R)-2-hydroxybutane-1,2,4-tricarboxylate) into cis-homoaconitate in vitro, nor the reverse reaction. Is not active toward (S)-homocitrate, cis-aconitate or citrate as substrate. The protein is Homoaconitase small subunit (hacB) of Thermus thermophilus (strain ATCC BAA-163 / DSM 7039 / HB27).